Here is a 316-residue protein sequence, read N- to C-terminus: L-lactate dehydrogenase (316 aa).

NAD(+) is bound by residues Met-14, 14–150, Ile-15, Asp-35, Tyr-67, Gly-81, Phe-82, Val-125, Asn-127, and Leu-150; that span reads MIGG…IIGL. Arg-95 contacts substrate. Substrate contacts are provided by Arg-158 and His-182. His-182 (proton acceptor) is an active-site residue.

It belongs to the LDH/MDH superfamily. LDH family. In terms of assembly, homotetramer.

The catalysed reaction is (S)-lactate + NAD(+) = pyruvate + NADH + H(+). The protein operates within fermentation; pyruvate fermentation to lactate; (S)-lactate from pyruvate: step 1/1. The polypeptide is L-lactate dehydrogenase (Plasmodium falciparum (isolate CDC / Honduras)).